Reading from the N-terminus, the 332-residue chain is Transaldolase (332 aa).

The active-site Schiff-base intermediate with substrate is Lys135.

The protein belongs to the transaldolase family. Type 1 subfamily. Homodimer.

Its subcellular location is the cytoplasm. It carries out the reaction D-sedoheptulose 7-phosphate + D-glyceraldehyde 3-phosphate = D-erythrose 4-phosphate + beta-D-fructose 6-phosphate. It functions in the pathway carbohydrate degradation; pentose phosphate pathway; D-glyceraldehyde 3-phosphate and beta-D-fructose 6-phosphate from D-ribose 5-phosphate and D-xylulose 5-phosphate (non-oxidative stage): step 2/3. Functionally, transaldolase is important for the balance of metabolites in the pentose-phosphate pathway. This is Transaldolase from Prochlorococcus marinus (strain NATL2A).